Reading from the N-terminus, the 235-residue chain is Purine nucleoside phosphorylase DeoD-type (235 aa).

His4 serves as a coordination point for a purine D-ribonucleoside. Phosphate is bound by residues Gly20, Arg24, Arg43, and 87 to 90; that span reads RVGT. A purine D-ribonucleoside is bound by residues 180–182 and 204–205; these read EME and SD. Asp205 acts as the Proton donor in catalysis.

It belongs to the PNP/UDP phosphorylase family. Homohexamer; trimer of homodimers.

The enzyme catalyses a purine D-ribonucleoside + phosphate = a purine nucleobase + alpha-D-ribose 1-phosphate. The catalysed reaction is a purine 2'-deoxy-D-ribonucleoside + phosphate = a purine nucleobase + 2-deoxy-alpha-D-ribose 1-phosphate. Its function is as follows. Catalyzes the reversible phosphorolytic breakdown of the N-glycosidic bond in the beta-(deoxy)ribonucleoside molecules, with the formation of the corresponding free purine bases and pentose-1-phosphate. The chain is Purine nucleoside phosphorylase DeoD-type from Oceanobacillus iheyensis (strain DSM 14371 / CIP 107618 / JCM 11309 / KCTC 3954 / HTE831).